The chain runs to 308 residues: MSTWTGKRVAVLYGGRSSEREVSLRTGAACADALRQKGHEVVLLDVDLEVAARLRAERVEVAFVALHGRFGEDGSIQGLLESMAIPYTGSGVLASAMGMDKTVSKAIFRSLGLAVADYRVFPRASAGSIGVGDLPFGLPCVVKPAGEGSSVGVHLVNEAAELGPACRDAASHAGDVIVERYVKGTEVDVAVLDGKALGAIEIVPANAFYDYAAKYTAGTTKYFYPARLPEAHVRAVMQAAEAAHRGIGCSGVTRVDFIVAGDGTPYILEVNTLPGMTATSLVPKIAAGLGLSFPDLCERILDGAALKA.

An ATP-grasp domain is found at 105–302 (KAIFRSLGLA…FPDLCERILD (198 aa)). 133-188 (DLPFGLPCVVKPAGEGSSVGVHLVNEAAELGPACRDAASHAGDVIVERYVKGTEVD) is an ATP binding site. Residues aspartate 256, glutamate 269, and asparagine 271 each coordinate Mg(2+).

This sequence belongs to the D-alanine--D-alanine ligase family. Mg(2+) serves as cofactor. Mn(2+) is required as a cofactor.

The protein localises to the cytoplasm. It carries out the reaction 2 D-alanine + ATP = D-alanyl-D-alanine + ADP + phosphate + H(+). It participates in cell wall biogenesis; peptidoglycan biosynthesis. Functionally, cell wall formation. The protein is D-alanine--D-alanine ligase of Anaeromyxobacter dehalogenans (strain 2CP-1 / ATCC BAA-258).